Here is a 442-residue protein sequence, read N- to C-terminus: ATP-dependent protease ATPase subunit HslU (442 aa).

Residues Ile18, 60-65, Asp255, Glu320, and Arg392 each bind ATP; that span reads GVGKTE.

This sequence belongs to the ClpX chaperone family. HslU subfamily. As to quaternary structure, a double ring-shaped homohexamer of HslV is capped on each side by a ring-shaped HslU homohexamer. The assembly of the HslU/HslV complex is dependent on binding of ATP.

The protein localises to the cytoplasm. In terms of biological role, ATPase subunit of a proteasome-like degradation complex; this subunit has chaperone activity. The binding of ATP and its subsequent hydrolysis by HslU are essential for unfolding of protein substrates subsequently hydrolyzed by HslV. HslU recognizes the N-terminal part of its protein substrates and unfolds these before they are guided to HslV for hydrolysis. The chain is ATP-dependent protease ATPase subunit HslU from Aeromonas hydrophila subsp. hydrophila (strain ATCC 7966 / DSM 30187 / BCRC 13018 / CCUG 14551 / JCM 1027 / KCTC 2358 / NCIMB 9240 / NCTC 8049).